The chain runs to 261 residues: Carnitinyl-CoA dehydratase (261 aa).

The active-site Nucleophile is the Glu111. Glu131 acts as the Proton acceptor in catalysis.

The protein belongs to the enoyl-CoA hydratase/isomerase family.

The enzyme catalyses (R)-carnitinyl-CoA = crotonobetainyl-CoA + H2O. Its pathway is amine and polyamine metabolism; carnitine metabolism. Functionally, catalyzes the reversible dehydration of L-carnitinyl-CoA to crotonobetainyl-CoA. The sequence is that of Carnitinyl-CoA dehydratase from Salmonella typhi.